Reading from the N-terminus, the 66-residue chain is uncharacterized protein (66 aa).

This is an uncharacterized protein from Saccharomyces cerevisiae (strain ATCC 204508 / S288c) (Baker's yeast).